The following is a 322-amino-acid chain: Helix-loop-helix 34 (322 aa).

Positions 1–11 are enriched in basic and acidic residues; sequence METNLSEEKQK. A disordered region spans residues 1–23; the sequence is METNLSEEKQKPSKSQAQQRRQM. One can recognise a bHLH domain in the interval 8 to 62; it reads EKQKPSKSQAQQRRQMENYEFSQLANELPLARAISGQHIDKTTMVRLATAYIKLH. PAS domains follow at residues 82-152 and 203-276; these read DSLW…DLNW and PTPV…FNLG.

Efficient DNA binding requires dimerization with another bHLH protein. As to expression, expressed in a small subset of neurons, probably AVJL and AVJR. Expressed in the AVH neurons.

It is found in the nucleus. Functionally, transcription factor. Involved in specifying AVH neuron identity, acting in concert with unc-42. Involved in serotonin-mediated feeding behavior, probably acting by modulating expression of genes involved in glutamate signaling. The chain is Helix-loop-helix 34 (hlh-34) from Caenorhabditis elegans.